Here is a 201-residue protein sequence, read N- to C-terminus: Ras-related protein Rab-35 (201 aa).

Residues glycine 18, valine 19, glycine 20, lysine 21, serine 22, serine 23, serine 34, glycine 35, tyrosine 37, threonine 39, and threonine 40 each coordinate GTP. Residue serine 22 participates in Mg(2+) binding. The Switch 1 signature appears at 30–42 (DNTFSGSYITTIG). Threonine 40 and aspartate 63 together coordinate Mg(2+). Positions 64–80 (TAGQERFRTITSTYYRG) match the Switch 2 motif. Residue glycine 66 coordinates GTP. The residue at position 72 (threonine 72) is a Phosphothreonine; by LRRK2. The residue at position 75 (serine 75) is an O-(2-cholinephosphoryl)serine. Tyrosine 77 is subject to O-AMP-tyrosine. Asparagine 120, lysine 121, aspartate 123, alanine 151, and lysine 152 together coordinate GTP. S-geranylgeranyl cysteine attachment occurs at residues cysteine 200 and cysteine 201.

It belongs to the small GTPase superfamily. Rab family. Interacts with DENND1A and DENND1B; in a nucleotide-dependent manner. Interacts with DENND1C; weak interaction which is nucleotide-independent. Interacts (GTP-bound form) with ACAP2, RUSC2, OCRL MICAL1 and MICALL1; the interaction is direct and probably recruits these effectors to membranes. Interacts with EHD1; the interaction is indirect through MICALL1 and probably recruits EHD1 to membranes. Interacts with GDI1, GDI2, CHM and CHML; phosphorylation at Thr-72 by LRRK2 disrupts these interactions. Requires Mg(2+) as cofactor. In terms of processing, phosphorylation at Thr-72 by LRRK2 prevents the association of regulatory proteins including CHM, CHML and GDP dissociation inhibitors GDI1 and GDI2. Post-translationally, AMPylation at Tyr-77 by L.pneumophila DrrA occurs in the switch 2 region and leads to moderate inactivation of the GTPase activity. It appears to prolong the lifetime of the GTP state of RAB1B by restricting access of GTPase effectors to switch 2 and blocking effector-stimulated GTP hydrolysis, thereby rendering RAB35 constitutively active. Phosphocholinated by L.pneumophila AnkX. Both GDP-bound and GTP-bound forms can be phosphocholinated. Phosphocholination inhibits the GEF activity of DENND1A.

It localises to the cell membrane. Its subcellular location is the membrane. It is found in the clathrin-coated pit. The protein localises to the cytoplasmic vesicle. The protein resides in the clathrin-coated vesicle. It localises to the endosome. Its subcellular location is the melanosome. The catalysed reaction is GTP + H2O = GDP + phosphate + H(+). Its activity is regulated as follows. Regulated by guanine nucleotide exchange factors (GEFs) including DENND1A, DENND1B and DENND1C which promote the exchange of bound GDP for free GTP. Regulated by GTPase activating proteins (GAPs) including TBC1D10 and TBC1D13 which increase GTP hydrolysis activity. Inhibited by GDP dissociation inhibitors (GDIs) which prevent Rab-GDP dissociation. The small GTPases Rab are key regulators of intracellular membrane trafficking, from the formation of transport vesicles to their fusion with membranes. Rabs cycle between an inactive GDP-bound form and an active GTP-bound form that is able to recruit to membranes different sets of downstream effectors directly responsible for vesicle formation, movement, tethering and fusion. RAB35 is involved in the process of endocytosis and is an essential rate-limiting regulator of the fast recycling pathway back to the plasma membrane. During cytokinesis, required for the postfurrowing terminal steps, namely for intercellular bridge stability and abscission, possibly by controlling phosphatidylinositol 4,5-bis phosphate (PIP2) and SEPT2 localization at the intercellular bridge. May indirectly regulate neurite outgrowth. Together with TBC1D13 may be involved in regulation of insulin-induced glucose transporter SLC2A4/GLUT4 translocation to the plasma membrane in adipocytes. The sequence is that of Ras-related protein Rab-35 from Homo sapiens (Human).